Here is a 239-residue protein sequence, read N- to C-terminus: Large ribosomal subunit protein uL2 (239 aa).

Positions 203 to 239 (PFGGKEHHPGKPTTTSRRAPPGRKVGHIAARRTGRRK) are disordered. A compositionally biased stretch (basic residues) spans 222-239 (PPGRKVGHIAARRTGRRK).

It belongs to the universal ribosomal protein uL2 family. Part of the 50S ribosomal subunit. Forms a bridge to the 30S subunit in the 70S ribosome.

One of the primary rRNA binding proteins. Required for association of the 30S and 50S subunits to form the 70S ribosome, for tRNA binding and peptide bond formation. It has been suggested to have peptidyltransferase activity; this is somewhat controversial. Makes several contacts with the 16S rRNA in the 70S ribosome. In Pyrococcus abyssi (strain GE5 / Orsay), this protein is Large ribosomal subunit protein uL2.